We begin with the raw amino-acid sequence, 498 residues long: ATP synthase subunit beta, chloroplastic (498 aa).

ATP is bound at residue 172–179; sequence GGAGVGKT.

Belongs to the ATPase alpha/beta chains family. F-type ATPases have 2 components, CF(1) - the catalytic core - and CF(0) - the membrane proton channel. CF(1) has five subunits: alpha(3), beta(3), gamma(1), delta(1), epsilon(1). CF(0) has four main subunits: a(1), b(1), b'(1) and c(9-12).

It localises to the plastid. The protein localises to the chloroplast thylakoid membrane. It catalyses the reaction ATP + H2O + 4 H(+)(in) = ADP + phosphate + 5 H(+)(out). Functionally, produces ATP from ADP in the presence of a proton gradient across the membrane. The catalytic sites are hosted primarily by the beta subunits. This is ATP synthase subunit beta, chloroplastic from Oenothera biennis (German evening primrose).